Here is a 450-residue protein sequence, read N- to C-terminus: Beta-glucosidase (450 aa).

The active-site Proton donor is E166. The active-site Nucleophile is the E355.

This sequence belongs to the glycosyl hydrolase 1 family.

The enzyme catalyses Hydrolysis of terminal, non-reducing beta-D-glucosyl residues with release of beta-D-glucose.. The chain is Beta-glucosidase (bglA) from Niallia circulans (Bacillus circulans).